The chain runs to 288 residues: UTP--glucose-1-phosphate uridylyltransferase (288 aa).

Belongs to the UDPGP type 2 family.

It carries out the reaction alpha-D-glucose 1-phosphate + UTP + H(+) = UDP-alpha-D-glucose + diphosphate. Its pathway is glycolipid metabolism; diglucosyl-diacylglycerol biosynthesis. Catalyzes the formation of UDP-glucose from glucose-1-phosphate and UTP. This is an intermediate step in the biosynthesis of diglucosyl-diacylglycerol (Glc2-DAG), i.e. the predominant glycolipid found in the S.aureus membrane, which is also used as a membrane anchor for lipoteichoic acid (LTA). In Staphylococcus aureus (strain MSSA476), this protein is UTP--glucose-1-phosphate uridylyltransferase (gtaB).